The following is a 714-amino-acid chain: Fatty acid oxidation complex subunit alpha (714 aa).

An enoyl-CoA hydratase region spans residues 1–190 (MEMASAFTLN…KLGLVDDVVP (190 aa)). The 3-hydroxyacyl-CoA dehydrogenase stretch occupies residues 306–714 (APLNSVGILG…FWKTTATDLQ (409 aa)).

In the N-terminal section; belongs to the enoyl-CoA hydratase/isomerase family. The protein in the central section; belongs to the 3-hydroxyacyl-CoA dehydrogenase family. Heterotetramer of two alpha chains (FadJ) and two beta chains (FadI).

It is found in the cytoplasm. The catalysed reaction is a (3S)-3-hydroxyacyl-CoA = a (2E)-enoyl-CoA + H2O. It carries out the reaction a 4-saturated-(3S)-3-hydroxyacyl-CoA = a (3E)-enoyl-CoA + H2O. The enzyme catalyses a (3S)-3-hydroxyacyl-CoA + NAD(+) = a 3-oxoacyl-CoA + NADH + H(+). It catalyses the reaction (3S)-3-hydroxybutanoyl-CoA = (3R)-3-hydroxybutanoyl-CoA. Its pathway is lipid metabolism; fatty acid beta-oxidation. Functionally, catalyzes the formation of a hydroxyacyl-CoA by addition of water on enoyl-CoA. Also exhibits 3-hydroxyacyl-CoA epimerase and 3-hydroxyacyl-CoA dehydrogenase activities. This Shigella boydii serotype 4 (strain Sb227) protein is Fatty acid oxidation complex subunit alpha.